The sequence spans 316 residues: tRNA methyltransferase 10 homolog B (316 aa).

A coiled-coil region spans residues 73-98 (EKIVAAKKSKRKQEKERRKANRVENS). Residues 77 to 96 (AAKKSKRKQEKERRKANRVE) are disordered. Positions 113-310 (IKERLLEAKH…KGVSSRKGYV (198 aa)) constitute an SAM-dependent MTase TRM10-type domain.

It belongs to the class IV-like SAM-binding methyltransferase superfamily. TRM10 family.

It carries out the reaction guanosine(9) in tRNA + S-adenosyl-L-methionine = N(1)-methylguanosine(9) in tRNA + S-adenosyl-L-homocysteine + H(+). In terms of biological role, S-adenosyl-L-methionine-dependent guanine N(1)-methyltransferase that catalyzes the formation of N(1)-methylguanine at position 9 (m1G9) in tRNAs. Probably not able to catalyze formation of N(1)-methyladenine at position 9 (m1A9) in tRNAs. The chain is tRNA methyltransferase 10 homolog B (TRMT10B) from Bos taurus (Bovine).